Consider the following 157-residue polypeptide: Crossover junction endodeoxyribonuclease RuvC (157 aa).

Active-site residues include Asp7, Glu67, and Asp140. Mg(2+)-binding residues include Asp7, Glu67, and Asp140.

Belongs to the RuvC family. In terms of assembly, homodimer which binds Holliday junction (HJ) DNA. The HJ becomes 2-fold symmetrical on binding to RuvC with unstacked arms; it has a different conformation from HJ DNA in complex with RuvA. In the full resolvosome a probable DNA-RuvA(4)-RuvB(12)-RuvC(2) complex forms which resolves the HJ. It depends on Mg(2+) as a cofactor.

Its subcellular location is the cytoplasm. The catalysed reaction is Endonucleolytic cleavage at a junction such as a reciprocal single-stranded crossover between two homologous DNA duplexes (Holliday junction).. Functionally, the RuvA-RuvB-RuvC complex processes Holliday junction (HJ) DNA during genetic recombination and DNA repair. Endonuclease that resolves HJ intermediates. Cleaves cruciform DNA by making single-stranded nicks across the HJ at symmetrical positions within the homologous arms, yielding a 5'-phosphate and a 3'-hydroxyl group; requires a central core of homology in the junction. The consensus cleavage sequence is 5'-(A/T)TT(C/G)-3'. Cleavage occurs on the 3'-side of the TT dinucleotide at the point of strand exchange. HJ branch migration catalyzed by RuvA-RuvB allows RuvC to scan DNA until it finds its consensus sequence, where it cleaves and resolves the cruciform DNA. This chain is Crossover junction endodeoxyribonuclease RuvC, found in Rickettsia prowazekii (strain Madrid E).